The chain runs to 130 residues: Protein ApaG (130 aa).

The 125-residue stretch at 3–127 (STITRDIQIT…FSLDSPFSRQ (125 aa)) folds into the ApaG domain.

The protein is Protein ApaG of Beijerinckia indica subsp. indica (strain ATCC 9039 / DSM 1715 / NCIMB 8712).